The chain runs to 317 residues: Aspartate carbamoyltransferase catalytic subunit (317 aa).

The carbamoyl phosphate site is built by R66 and T67. K94 contributes to the L-aspartate binding site. 3 residues coordinate carbamoyl phosphate: R116, H144, and Q147. L-aspartate is bound by residues R177 and R231. Positions 272 and 273 each coordinate carbamoyl phosphate.

The protein belongs to the aspartate/ornithine carbamoyltransferase superfamily. ATCase family. In terms of assembly, heterododecamer (2C3:3R2) of six catalytic PyrB chains organized as two trimers (C3), and six regulatory PyrI chains organized as three dimers (R2).

It carries out the reaction carbamoyl phosphate + L-aspartate = N-carbamoyl-L-aspartate + phosphate + H(+). The protein operates within pyrimidine metabolism; UMP biosynthesis via de novo pathway; (S)-dihydroorotate from bicarbonate: step 2/3. Catalyzes the condensation of carbamoyl phosphate and aspartate to form carbamoyl aspartate and inorganic phosphate, the committed step in the de novo pyrimidine nucleotide biosynthesis pathway. This Bradyrhizobium sp. (strain BTAi1 / ATCC BAA-1182) protein is Aspartate carbamoyltransferase catalytic subunit.